Reading from the N-terminus, the 351-residue chain is Thiamine-phosphate synthase (351 aa).

The segment at 1-129 (MVEPYSQQKQ…GQACKQMRYR (129 aa)) is unknown. The interval 130–351 (VYSLETNLMG…SQLNRIKPES (222 aa)) is thiamine-phosphate synthase. 4-amino-2-methyl-5-(diphosphooxymethyl)pyrimidine is bound by residues 177-181 (QYRDK) and asparagine 209. 2 residues coordinate Mg(2+): aspartate 210 and aspartate 229. Serine 248 serves as a coordination point for 4-amino-2-methyl-5-(diphosphooxymethyl)pyrimidine. 274–276 (TPT) lines the 2-[(2R,5Z)-2-carboxy-4-methylthiazol-5(2H)-ylidene]ethyl phosphate pocket. 4-amino-2-methyl-5-(diphosphooxymethyl)pyrimidine is bound at residue lysine 277. Glycine 304 contributes to the 2-[(2R,5Z)-2-carboxy-4-methylthiazol-5(2H)-ylidene]ethyl phosphate binding site.

It belongs to the thiamine-phosphate synthase family. Mg(2+) serves as cofactor.

The catalysed reaction is 2-[(2R,5Z)-2-carboxy-4-methylthiazol-5(2H)-ylidene]ethyl phosphate + 4-amino-2-methyl-5-(diphosphooxymethyl)pyrimidine + 2 H(+) = thiamine phosphate + CO2 + diphosphate. The enzyme catalyses 2-(2-carboxy-4-methylthiazol-5-yl)ethyl phosphate + 4-amino-2-methyl-5-(diphosphooxymethyl)pyrimidine + 2 H(+) = thiamine phosphate + CO2 + diphosphate. It carries out the reaction 4-methyl-5-(2-phosphooxyethyl)-thiazole + 4-amino-2-methyl-5-(diphosphooxymethyl)pyrimidine + H(+) = thiamine phosphate + diphosphate. It functions in the pathway cofactor biosynthesis; thiamine diphosphate biosynthesis; thiamine phosphate from 4-amino-2-methyl-5-diphosphomethylpyrimidine and 4-methyl-5-(2-phosphoethyl)-thiazole: step 1/1. In terms of biological role, condenses 4-methyl-5-(beta-hydroxyethyl)thiazole monophosphate (THZ-P) and 2-methyl-4-amino-5-hydroxymethyl pyrimidine pyrophosphate (HMP-PP) to form thiamine monophosphate (TMP). The sequence is that of Thiamine-phosphate synthase from Nostoc sp. (strain PCC 7120 / SAG 25.82 / UTEX 2576).